The chain runs to 524 residues: Probable endopeptidase p60 (524 aa).

The signal sequence occupies residues 1 to 27 (MNMKKATIAATAGIAVTAFAAPTIASA). The LysM 1 domain maps to 28–71 (STVVVEAGDTLWGIAQSKGTTVDALKKANNLTSDKIVPGQKLQV). Residues 78–142 (KTEKSVSATW…VNGKYLGDAV (65 aa)) form the SH3b domain. The tract at residues 150–188 (QEVKQETTKQTAPAAETKTEVKQSTPAPTAPKAAETKTA) is disordered. Positions 174–188 (TPAPTAPKAAETKTA) are enriched in low complexity. One can recognise a LysM 2 domain in the interval 196 to 239 (TTHTVKSGDTIWALSVKYGASVQDLMSWNNLSSSSIYVGQKIAV). Residues 272–299 (NTNTTVKKEVTTQTQTNTTKAPAQAAKP) are compositionally biased toward low complexity. The interval 272-313 (NTNTTVKKEVTTQTQTNTTKAPAQAAKPAPAPAPAPTVNTNA) is disordered. The 44-residue stretch at 314-357 (STYTVKSGDSLSKIANTFGTSVSKIKALNNLTSDNLQVGTVLKV) folds into the LysM 3 domain. The tract at residues 360–408 (TVPTTNTNNNSNTTAPTTNTSNNNTSSNTSTPSKNTNTNTNQGSSNSAS) is disordered. Residues 362–408 (PTTNTNNNSNTTAPTTNTSNNNTSSNTSTPSKNTNTNTNQGSSNSAS) show a composition bias toward low complexity. Positions 406 to 524 (SASASALIAE…GKYLVGFGRV (119 aa)) constitute a NlpC/P60 domain. Catalysis depends on Cys436, which acts as the Nucleophile. His486 functions as the Proton acceptor in the catalytic mechanism. The active site involves Asn498.

Belongs to the peptidase C40 family.

In terms of biological role, this major extracellular protein may be involved in the invasion of non-professional phagocytic cells by Listeria. This Listeria welshimeri protein is Probable endopeptidase p60 (iap).